The following is a 579-amino-acid chain: Vitamin B6 transporter TPN1 (579 aa).

The next 12 membrane-spanning stretches (helical) occupy residues 99–119 (TGGLSSMSSFLLGPLLFGLSF), 123–143 (LASSLISVTIGCLIAAYCSIM), 158–178 (LFGWWFVKLVALASIIGVMGW), 199–219 (PLWVGIVIVTVCSFLVAIFGI), 222–242 (VIKVETYLSVPVLTAFLLLYI), 275–295 (LCYSITATWGSITADYYILFP), 303–323 (IFCLTFFGTFLPTCFVGILGL), 363–383 (VVVLVFSLVSNNIINTYSAAF), 395–415 (IPRWFWSIVCTIICLVCALIG), 422–442 (ILGNFLPMIGYWISMYFILLF), 520–540 (FAFIVGVAGVVVGMAQAYWIG), and 546–566 (FGEYGGDVAMWLSMAFSGVVY).

It belongs to the purine-cytosine permease (2.A.39) family.

It localises to the membrane. Its function is as follows. Thiamine-regulated, high affinity import carrier of pyridoxine, pyridoxal and pyridoxamine. The chain is Vitamin B6 transporter TPN1 (TPN1) from Saccharomyces cerevisiae (Baker's yeast).